Consider the following 31-residue polypeptide: Cytochrome b6-f complex subunit 6 (31 aa).

Residues 4–26 (LTSYFGFLLAALTITSALFIGLN) traverse the membrane as a helical segment.

It belongs to the PetL family. The 4 large subunits of the cytochrome b6-f complex are cytochrome b6, subunit IV (17 kDa polypeptide, PetD), cytochrome f and the Rieske protein, while the 4 small subunits are PetG, PetL, PetM and PetN. The complex functions as a dimer.

The protein localises to the plastid. It localises to the chloroplast thylakoid membrane. Component of the cytochrome b6-f complex, which mediates electron transfer between photosystem II (PSII) and photosystem I (PSI), cyclic electron flow around PSI, and state transitions. PetL is important for photoautotrophic growth as well as for electron transfer efficiency and stability of the cytochrome b6-f complex. The chain is Cytochrome b6-f complex subunit 6 from Amaranthus caudatus (Love-lies-bleeding).